The sequence spans 142 residues: Large ribosomal subunit protein uL13 (142 aa).

This sequence belongs to the universal ribosomal protein uL13 family. In terms of assembly, part of the 50S ribosomal subunit.

Functionally, this protein is one of the early assembly proteins of the 50S ribosomal subunit, although it is not seen to bind rRNA by itself. It is important during the early stages of 50S assembly. This Tolumonas auensis (strain DSM 9187 / NBRC 110442 / TA 4) protein is Large ribosomal subunit protein uL13.